The following is a 165-amino-acid chain: uncharacterized protein (165 aa).

The next 6 membrane-spanning stretches (helical) occupy residues Ile-6–Ala-26, Leu-28–Tyr-48, Ala-54–Ala-74, Trp-78–Val-98, Ala-110–Leu-130, and Ala-138–Ile-158.

It localises to the cell membrane. This is an uncharacterized protein from Bacillus subtilis (strain 168).